The sequence spans 372 residues: Flagellar P-ring protein (372 aa).

An N-terminal signal peptide occupies residues 1–29 (MPARPIPVPAFALALALAAALAVPAPAAA).

It belongs to the FlgI family. The basal body constitutes a major portion of the flagellar organelle and consists of four rings (L,P,S, and M) mounted on a central rod.

It is found in the periplasm. The protein localises to the bacterial flagellum basal body. Functionally, assembles around the rod to form the L-ring and probably protects the motor/basal body from shearing forces during rotation. The chain is Flagellar P-ring protein from Anaeromyxobacter dehalogenans (strain 2CP-1 / ATCC BAA-258).